The primary structure comprises 1828 residues: InaD-like protein (1828 aa).

Residues 5 to 65 (PAPDKLQVLQ…SIKQLKGQLS (61 aa)) form the L27 domain. PDZ domains lie at 134 to 221 (YIDI…AREP), 248 to 328 (DVEL…ARDP), and 365 to 453 (GVEL…VRRK). A phosphoserine mark is found at S459 and S522. Residues 553 to 639 (DAELQKYSKL…PFTLVCCRRL (87 aa)) enclose the PDZ 4 domain. S645 is modified (phosphoserine). PDZ domains are found at residues 686–758 (IVEL…EVLK) and 1070–1162 (IVEI…QSLS). Residues 1168–1220 (IPSVHNKANKIANNQDQNTEEKKEKRQGTPPPPMKLPPPYKAPSDDSDENEEE) form a disordered region. The segment covering 1196–1208 (TPPPPMKLPPPYK) has biased composition (pro residues). S1211 is modified (phosphoserine). The PDZ 7 domain maps to 1241–1324 (IIELEKDKNG…KVKLVFIRNE (84 aa)). The interval 1333–1362 (APFPVPSSSPSSLEDQSGTEPVSSEEDGSL) is disordered. Over residues 1345 to 1354 (LEDQSGTEPV) the composition is skewed to polar residues. PDZ domains are found at residues 1464–1547 (IIEI…YRDE) and 1560–1642 (PVDL…GRLR). A Phosphothreonine modification is found at T1535. Residues 1645-1668 (SWTSSRKTSQNSQGSQHSTHSSFH) show a composition bias toward polar residues. The disordered stretch occupies residues 1645 to 1669 (SWTSSRKTSQNSQGSQHSTHSSFHP). The PDZ 10 domain maps to 1703–1789 (TVEIIRELSD…RIILQVVADT (87 aa)). Residues 1805–1828 (YHLGSPTAEHHPEDTEEPLQMTAG) form a disordered region.

Forms a ternary complex with PALS1 and CRB1. Component of a complex whose core is composed of ARHGAP17, AMOT, PALS1, INADL/PATJ and PARD3/PAR3. Forms a heterotrimeric complex composed of MMP5, LIN7B and PATJ; the N-terminal L27 domain of PALS1 interacts with the L27 domain of PATJ and the C-terminal L27 domain of PALS1 interacts with the L27 domain of LIN7B. Component of a complex composed of CRB3, PALS1 and PATJ. As part of the Crumbs complex; interacts with WWP1, the interaction is enhanced by AMOTL2 and facilitates WWP1 localization to the plasma membrane. The Crumbs complex promotes monoubiquitination of AMOTL2 by WWP1, which activates the Hippo signaling pathway. Interacts (via N-terminus) with PALS1/PALS (via PDZ domain). Interacts with TJP3/ZO-3 and CLDN1/claudin-1. Interacts with ASIC3, KCNJ10, KCNJ15, GRIN2A, GRIN2B, GRIN2C, GRIN2D, NLGN2, and HTR2A. Interacts with MPP7. Directly interacts with HTR4. Interacts (via PDZ domain 8) with WWC1 (via the ADDV motif). Interacts with SLC6A4. Interacts (via C-terminus) with ARHGEF18. Interacts with NPHP1. Interacts with PARD3/PAR3. Interacts (via PDZ1-6 domains) with TJP1/ZO1; the interaction is required for attachment and extension of TJP1/ZO1 condensates along the apical cell interface.

It localises to the cell junction. Its subcellular location is the tight junction. The protein resides in the apical cell membrane. The protein localises to the cytoplasm. It is found in the perinuclear region. Scaffolding protein that facilitates the localization of proteins to the cell membrane. Required for the correct formation of tight junctions and epithelial apico-basal polarity. Acts (via its L27 domain) as an apical connector and elongation factor for multistranded TJP1/ZO1 condensates that form a tight junction belt, thereby required for the formation of the tight junction-mediated cell barrier. Positively regulates epithelial cell microtubule elongation and cell migration, possibly via facilitating localization of PRKCI/aPKC and PAR3D/PAR3 at the leading edge of migrating cells. Plays a role in the correct reorientation of the microtubule-organizing center during epithelial migration. May regulate the surface expression and/or function of ASIC3 in sensory neurons. May recruit ARHGEF18 to apical cell-cell boundaries. This is InaD-like protein from Canis lupus familiaris (Dog).